The sequence spans 641 residues: Threonine--tRNA ligase (641 aa).

Residues 1-61 (MPVITLPDGS…ENDTELAIVT (61 aa)) form the TGS domain. The catalytic stretch occupies residues 242–533 (DHRKIGKKLG…LIEEYEGAFP (292 aa)). Residues Cys333, His384, and His510 each contribute to the Zn(2+) site.

The protein belongs to the class-II aminoacyl-tRNA synthetase family. As to quaternary structure, homodimer. Zn(2+) is required as a cofactor.

The protein localises to the cytoplasm. It catalyses the reaction tRNA(Thr) + L-threonine + ATP = L-threonyl-tRNA(Thr) + AMP + diphosphate + H(+). Functionally, catalyzes the attachment of threonine to tRNA(Thr) in a two-step reaction: L-threonine is first activated by ATP to form Thr-AMP and then transferred to the acceptor end of tRNA(Thr). Also edits incorrectly charged L-seryl-tRNA(Thr). The protein is Threonine--tRNA ligase of Marinobacter nauticus (strain ATCC 700491 / DSM 11845 / VT8) (Marinobacter aquaeolei).